Consider the following 325-residue polypeptide: Probable cell division protein WhiA (325 aa).

The segment at residues 273–306 (SLEELGALADPPLTKDAVAGRIRRLLALADKRAN) is a DNA-binding region (H-T-H motif).

The protein belongs to the WhiA family.

Involved in cell division and chromosome segregation. The chain is Probable cell division protein WhiA from Parafrankia sp. (strain EAN1pec).